Reading from the N-terminus, the 171-residue chain is Large ribosomal subunit protein bL9 (171 aa).

This sequence belongs to the bacterial ribosomal protein bL9 family.

Functionally, binds to the 23S rRNA. This Rickettsia felis (strain ATCC VR-1525 / URRWXCal2) (Rickettsia azadi) protein is Large ribosomal subunit protein bL9.